The primary structure comprises 195 residues: Shikimate kinase (195 aa).

ATP is bound at residue 33–38; sequence GAGKTT. T37 contributes to the Mg(2+) binding site. Positions 55, 79, and 101 each coordinate substrate. Residue R139 coordinates ATP. R158 serves as a coordination point for substrate. R175 contacts ATP.

The protein belongs to the shikimate kinase family. In terms of assembly, monomer. Requires Mg(2+) as cofactor.

Its subcellular location is the cytoplasm. It catalyses the reaction shikimate + ATP = 3-phosphoshikimate + ADP + H(+). Its pathway is metabolic intermediate biosynthesis; chorismate biosynthesis; chorismate from D-erythrose 4-phosphate and phosphoenolpyruvate: step 5/7. Its function is as follows. Catalyzes the specific phosphorylation of the 3-hydroxyl group of shikimic acid using ATP as a cosubstrate. This chain is Shikimate kinase, found in Nitrosospira multiformis (strain ATCC 25196 / NCIMB 11849 / C 71).